The sequence spans 223 residues: uncharacterized protein (223 aa).

The disordered stretch occupies residues 40–70; sequence GSKRLKPAKFGTEGKERVEQRTERQRTGSSK. Residues 51–70 show a composition bias toward basic and acidic residues; the sequence is TEGKERVEQRTERQRTGSSK.

This is an uncharacterized protein from Homo sapiens (Human).